The sequence spans 652 residues: DNA polymerase epsilon subunit B (652 aa).

It belongs to the DNA polymerase epsilon subunit B family. As to quaternary structure, heterotetramer. Consists of four subunits: POL2, DPB2, DPB3 and DPB4.

The protein resides in the nucleus. Its function is as follows. As accessory component of the DNA polymerase epsilon (DNA polymerase II) participates in chromosomal DNA replication. The polypeptide is DNA polymerase epsilon subunit B (DPB2) (Yarrowia lipolytica (strain CLIB 122 / E 150) (Yeast)).